The chain runs to 159 residues: Ribosomal RNA large subunit methyltransferase H (159 aa).

S-adenosyl-L-methionine contacts are provided by residues leucine 76, glycine 108, and 127–132 (FSKMTF).

Belongs to the RNA methyltransferase RlmH family. In terms of assembly, homodimer.

It localises to the cytoplasm. It carries out the reaction pseudouridine(1915) in 23S rRNA + S-adenosyl-L-methionine = N(3)-methylpseudouridine(1915) in 23S rRNA + S-adenosyl-L-homocysteine + H(+). In terms of biological role, specifically methylates the pseudouridine at position 1915 (m3Psi1915) in 23S rRNA. This is Ribosomal RNA large subunit methyltransferase H from Bacillus subtilis (strain 168).